Reading from the N-terminus, the 392-residue chain is GTPase Obg (392 aa).

The 159-residue stretch at 1–159 (MKFIDEALIR…RDLQLELMLL (159 aa)) folds into the Obg domain. The OBG-type G domain occupies 160–333 (ADVGMLGLPN…LCRDIMDFIE (174 aa)). Residues 166 to 173 (GLPNAGKS), 191 to 195 (FTTLV), 213 to 216 (DIPG), 283 to 286 (NKID), and 314 to 316 (SAA) each bind GTP. Residues Ser173 and Thr193 each contribute to the Mg(2+) site. Positions 361-392 (SEQVFTEDDQEEDDWDDWSEDDEEGVEIIYKP) are disordered. A compositionally biased stretch (acidic residues) spans 365–386 (FTEDDQEEDDWDDWSEDDEEGV).

Belongs to the TRAFAC class OBG-HflX-like GTPase superfamily. OBG GTPase family. Monomer. Mg(2+) is required as a cofactor.

It is found in the cytoplasm. Its function is as follows. An essential GTPase which binds GTP, GDP and possibly (p)ppGpp with moderate affinity, with high nucleotide exchange rates and a fairly low GTP hydrolysis rate. Plays a role in control of the cell cycle, stress response, ribosome biogenesis and in those bacteria that undergo differentiation, in morphogenesis control. The chain is GTPase Obg from Histophilus somni (strain 2336) (Haemophilus somnus).